The following is a 176-amino-acid chain: NAD(P)H-quinone oxidoreductase subunit 6, chloroplastic (176 aa).

5 helical membrane-spanning segments follow: residues 10–30 (FLLVFLGSGLLFGSIGVVLFT), 32–52 (PIFSAFSLGFVLVCISLLYIL), 61–81 (AQLLIYVGAITVLIIFAVMFM), 95–115 (VGDGITSLICTTILFSLISTI), and 152–172 (FFLPFELISIILLVALIGAIS).

This sequence belongs to the complex I subunit 6 family. NDH is composed of at least 16 different subunits, 5 of which are encoded in the nucleus.

It localises to the plastid. Its subcellular location is the chloroplast thylakoid membrane. It catalyses the reaction a plastoquinone + NADH + (n+1) H(+)(in) = a plastoquinol + NAD(+) + n H(+)(out). The enzyme catalyses a plastoquinone + NADPH + (n+1) H(+)(in) = a plastoquinol + NADP(+) + n H(+)(out). Functionally, NDH shuttles electrons from NAD(P)H:plastoquinone, via FMN and iron-sulfur (Fe-S) centers, to quinones in the photosynthetic chain and possibly in a chloroplast respiratory chain. The immediate electron acceptor for the enzyme in this species is believed to be plastoquinone. Couples the redox reaction to proton translocation, and thus conserves the redox energy in a proton gradient. The polypeptide is NAD(P)H-quinone oxidoreductase subunit 6, chloroplastic (ndhG) (Aethionema grandiflorum (Persian stone-cress)).